A 492-amino-acid polypeptide reads, in one-letter code: Glutamyl-tRNA(Gln) amidotransferase subunit A (492 aa).

Catalysis depends on charge relay system residues Lys78 and Ser158. The active-site Acyl-ester intermediate is the Ser182.

It belongs to the amidase family. GatA subfamily. Heterotrimer of A, B and C subunits.

It carries out the reaction L-glutamyl-tRNA(Gln) + L-glutamine + ATP + H2O = L-glutaminyl-tRNA(Gln) + L-glutamate + ADP + phosphate + H(+). Allows the formation of correctly charged Gln-tRNA(Gln) through the transamidation of misacylated Glu-tRNA(Gln) in organisms which lack glutaminyl-tRNA synthetase. The reaction takes place in the presence of glutamine and ATP through an activated gamma-phospho-Glu-tRNA(Gln). In Rickettsia akari (strain Hartford), this protein is Glutamyl-tRNA(Gln) amidotransferase subunit A.